A 140-amino-acid chain; its full sequence is Iron sulfur cluster assembly protein 1 (140 aa).

Belongs to the NifU family. As to quaternary structure, component of the core Fe-S cluster (ISC) assembly machinery. Requires [2Fe-2S] cluster as cofactor.

The protein resides in the mitosome matrix. The protein operates within cofactor biosynthesis; iron-sulfur cluster biosynthesis. Functionally, scaffold protein for the de novo synthesis of iron-sulfur (Fe-S) clusters within mitosomes, which is required for maturation of both [2Fe-2S] and [4Fe-4S] proteins. First, a [2Fe-2S] cluster is transiently assembled on the scaffold protein ISU1. In a second step, the cluster is released from ISU1, transferred to a glutaredoxin, followed by the formation of [2Fe-2S] proteins, the synthesis of [4Fe-4S] clusters and their target-specific insertion into the recipient apoproteins. Cluster assembly on ISU1 depends on the function of the cysteine desulfurase complex NFS1-ISD11, which serves as the sulfur donor for cluster synthesis, the iron-binding protein frataxin as the putative iron donor, and the electron transfer chain comprised of ferredoxin reductase and ferredoxin, which receive their electrons from NADH. In Encephalitozoon cuniculi (strain GB-M1) (Microsporidian parasite), this protein is Iron sulfur cluster assembly protein 1 (ISU1).